Consider the following 436-residue polypeptide: Anhydro-N-acetylmuramic acid kinase (436 aa).

Residue 32 to 39 (GTSLDGMD) participates in ATP binding.

It belongs to the anhydro-N-acetylmuramic acid kinase family.

The enzyme catalyses 1,6-anhydro-N-acetyl-beta-muramate + ATP + H2O = N-acetyl-D-muramate 6-phosphate + ADP + H(+). Its pathway is amino-sugar metabolism; 1,6-anhydro-N-acetylmuramate degradation. It functions in the pathway cell wall biogenesis; peptidoglycan recycling. In terms of biological role, catalyzes the specific phosphorylation of 1,6-anhydro-N-acetylmuramic acid (anhMurNAc) with the simultaneous cleavage of the 1,6-anhydro ring, generating MurNAc-6-P. Is required for the utilization of anhMurNAc either imported from the medium or derived from its own cell wall murein, and thus plays a role in cell wall recycling. The protein is Anhydro-N-acetylmuramic acid kinase of Psychrobacter arcticus (strain DSM 17307 / VKM B-2377 / 273-4).